The chain runs to 129 residues: Protein RALF-like 34 (129 aa).

Residues 1-23 form the signal peptide; sequence MAASSLNLLLILSLLTFISLQRS. The propeptide at 24-76 is removed in mature form; sequence ESLSDNPSLTLLPDGFDWPISHSDEFDIIDGEESFEVTEEDDGVTDRRSLYWR. Disulfide bonds link Cys-94/Cys-107 and Cys-121/Cys-127.

Belongs to the plant rapid alkalinization factor (RALF) family. Proteolytically cleaved, probably by S1P, a subtilisin-like serine protease (subtilase). Expressed in roots, stems and leaves.

It is found in the secreted. Cell signaling peptide that may regulate plant stress, growth, and development. Mediates a rapid alkalinization of extracellular space by mediating a transient increase in the cytoplasmic Ca(2+) concentration leading to a calcium-dependent signaling events through a cell surface receptor and a concomitant activation of some intracellular mitogen-activated protein kinases. This is Protein RALF-like 34 (RALFL34) from Arabidopsis thaliana (Mouse-ear cress).